The chain runs to 38 residues: Alpha-amylase (38 aa).

It belongs to the glycosyl hydrolase 13 family. As to quaternary structure, monomer. Ca(2+) serves as cofactor. The cofactor is chloride. As to expression, expressed by the venom gland.

Its subcellular location is the secreted. It carries out the reaction Endohydrolysis of (1-&gt;4)-alpha-D-glucosidic linkages in polysaccharides containing three or more (1-&gt;4)-alpha-linked D-glucose units.. The polypeptide is Alpha-amylase (Tityus serrulatus (Brazilian scorpion)).